The following is an 872-amino-acid chain: Alanine--tRNA ligase (872 aa).

Positions 566, 570, 668, and 672 each coordinate Zn(2+).

Belongs to the class-II aminoacyl-tRNA synthetase family. It depends on Zn(2+) as a cofactor.

Its subcellular location is the cytoplasm. The catalysed reaction is tRNA(Ala) + L-alanine + ATP = L-alanyl-tRNA(Ala) + AMP + diphosphate. Catalyzes the attachment of alanine to tRNA(Ala) in a two-step reaction: alanine is first activated by ATP to form Ala-AMP and then transferred to the acceptor end of tRNA(Ala). Also edits incorrectly charged Ser-tRNA(Ala) and Gly-tRNA(Ala) via its editing domain. In Lactococcus lactis subsp. cremoris (strain MG1363), this protein is Alanine--tRNA ligase.